The chain runs to 368 residues: Nuclease EXOG, mitochondrial (368 aa).

The transit peptide at 1 to 41 (MAAKSFASRLRDSRRFLNGFLAGAVVGAAGAGLTALQFFRR) directs the protein to the mitochondrion. The Proton acceptor role is filled by histidine 140. Asparagine 171 contacts a divalent metal cation.

It belongs to the DNA/RNA non-specific endonuclease family. Homodimer. The cofactor is a divalent metal cation.

It is found in the mitochondrion inner membrane. Functionally, endo/exonuclease with nicking activity towards supercoiled DNA, a preference for single-stranded DNA and 5'-3' exonuclease activity. In Mus musculus (Mouse), this protein is Nuclease EXOG, mitochondrial (Exog).